Here is a 336-residue protein sequence, read N- to C-terminus: Dihydroorotate dehydrogenase (quinone) (336 aa).

FMN is bound by residues 62–66 (AGLDK) and Thr86. Lys66 provides a ligand contact to substrate. 111–115 (NRMGF) serves as a coordination point for substrate. Positions 139 and 172 each coordinate FMN. Asn172 contacts substrate. The active-site Nucleophile is the Ser175. Asn177 provides a ligand contact to substrate. The FMN site is built by Lys217 and Thr245. A substrate-binding site is contributed by 246–247 (NT). FMN is bound by residues Gly268, Gly297, and 318 to 319 (YS).

This sequence belongs to the dihydroorotate dehydrogenase family. Type 2 subfamily. As to quaternary structure, monomer. FMN serves as cofactor.

It is found in the cell membrane. The catalysed reaction is (S)-dihydroorotate + a quinone = orotate + a quinol. Its pathway is pyrimidine metabolism; UMP biosynthesis via de novo pathway; orotate from (S)-dihydroorotate (quinone route): step 1/1. Its function is as follows. Catalyzes the conversion of dihydroorotate to orotate with quinone as electron acceptor. The protein is Dihydroorotate dehydrogenase (quinone) of Aeromonas hydrophila subsp. hydrophila (strain ATCC 7966 / DSM 30187 / BCRC 13018 / CCUG 14551 / JCM 1027 / KCTC 2358 / NCIMB 9240 / NCTC 8049).